Consider the following 491-residue polypeptide: NADH-quinone oxidoreductase subunit N (491 aa).

Helical transmembrane passes span 6–26 (TLAPVAPIIFLAIAIAAINWI), 37–57 (VAYPLSLLTTLVLTAWFGMNA), 69–89 (LVVIDPMANVLSAFCAAGLFV), 103–123 (MFAGEFYMLALFTLGGQIVMI), 128–148 (FLTLYLGLELLSLSSYALVAL), 163–183 (FVLGALASGFLLYGISMMYGA), 206–226 (LAFGVVFIVAGLSFKLGAAPF), 238–258 (PTAVTLLIAGGPKVAAFALFI), 273–293 (QMMLVVLSIISLAIGNLTAIV), 301–321 (LAYSTISHMGFVLLGLLSGVV), 335–355 (AMFYSVTYLLTTLGTFGIILL), 379–399 (FAFLMLVMMFSLAGIPPTVGF), 413–433 (GMTWLAVVAVLFSLIGAFYYL), and 458–478 (SMLSVNGAAVILLGLFPAALM).

Belongs to the complex I subunit 2 family. As to quaternary structure, NDH-1 is composed of 14 different subunits. Subunits NuoA, H, J, K, L, M, N constitute the membrane sector of the complex.

The protein resides in the cell inner membrane. It catalyses the reaction a quinone + NADH + 5 H(+)(in) = a quinol + NAD(+) + 4 H(+)(out). Functionally, NDH-1 shuttles electrons from NADH, via FMN and iron-sulfur (Fe-S) centers, to quinones in the respiratory chain. The immediate electron acceptor for the enzyme in this species is believed to be ubiquinone. Couples the redox reaction to proton translocation (for every two electrons transferred, four hydrogen ions are translocated across the cytoplasmic membrane), and thus conserves the redox energy in a proton gradient. The sequence is that of NADH-quinone oxidoreductase subunit N from Cupriavidus taiwanensis (strain DSM 17343 / BCRC 17206 / CCUG 44338 / CIP 107171 / LMG 19424 / R1) (Ralstonia taiwanensis (strain LMG 19424)).